A 148-amino-acid polypeptide reads, in one-letter code: MKALLLLGLLLLSVTVQGKIFERCDLARTLKRLGLAGFKGVSLANWMCLAKWESNYNTKATNYNPGSRSTDYGIFQINSRYWCNDGKTPRAVNACHIPCSDLLKDDITQAVACAKRVVSDPNGIRAWVAWRAHCENQDVSQYVRNCGV.

A signal peptide spans 1-18; that stretch reads MKALLLLGLLLLSVTVQG. The C-type lysozyme domain maps to 19-148; the sequence is KIFERCDLAR…VSQYVRNCGV (130 aa). Disulfide bonds link cysteine 24/cysteine 146, cysteine 48/cysteine 134, cysteine 83/cysteine 99, and cysteine 95/cysteine 113. Active-site residues include glutamate 53 and aspartate 71.

This sequence belongs to the glycosyl hydrolase 22 family. As to quaternary structure, monomer.

The enzyme catalyses Hydrolysis of (1-&gt;4)-beta-linkages between N-acetylmuramic acid and N-acetyl-D-glucosamine residues in a peptidoglycan and between N-acetyl-D-glucosamine residues in chitodextrins.. Its function is as follows. Lysozymes have primarily a bacteriolytic function; those in tissues and body fluids are associated with the monocyte-macrophage system and enhance the activity of immunoagents. The polypeptide is Lysozyme C (LYZ) (Halichoerus grypus (Gray seal)).